The following is a 277-amino-acid chain: Thymidylate synthase (277 aa).

Residue arginine 21 participates in dUMP binding. Histidine 51 provides a ligand contact to (6R)-5,10-methylene-5,6,7,8-tetrahydrofolate. 126-127 (RR) lines the dUMP pocket. The active-site Nucleophile is the cysteine 159. Residues 179-182 (RSGD), asparagine 190, and 220-222 (HLY) contribute to the dUMP site. Aspartate 182 lines the (6R)-5,10-methylene-5,6,7,8-tetrahydrofolate pocket. Alanine 276 contributes to the (6R)-5,10-methylene-5,6,7,8-tetrahydrofolate binding site.

Belongs to the thymidylate synthase family. Bacterial-type ThyA subfamily. In terms of assembly, homodimer.

The protein resides in the cytoplasm. The catalysed reaction is dUMP + (6R)-5,10-methylene-5,6,7,8-tetrahydrofolate = 7,8-dihydrofolate + dTMP. It participates in pyrimidine metabolism; dTTP biosynthesis. In terms of biological role, catalyzes the reductive methylation of 2'-deoxyuridine-5'-monophosphate (dUMP) to 2'-deoxythymidine-5'-monophosphate (dTMP) while utilizing 5,10-methylenetetrahydrofolate (mTHF) as the methyl donor and reductant in the reaction, yielding dihydrofolate (DHF) as a by-product. This enzymatic reaction provides an intracellular de novo source of dTMP, an essential precursor for DNA biosynthesis. This chain is Thymidylate synthase, found in Alcanivorax borkumensis (strain ATCC 700651 / DSM 11573 / NCIMB 13689 / SK2).